A 249-amino-acid polypeptide reads, in one-letter code: Putative S-adenosyl-L-methionine-dependent methyltransferase Mjls_0570 (249 aa).

S-adenosyl-L-methionine contacts are provided by residues Asp111 and Asp141–Leu142.

This sequence belongs to the UPF0677 family.

Exhibits S-adenosyl-L-methionine-dependent methyltransferase activity. In Mycobacterium sp. (strain JLS), this protein is Putative S-adenosyl-L-methionine-dependent methyltransferase Mjls_0570.